Here is a 400-residue protein sequence, read N- to C-terminus: Probable aspartate/prephenate aminotransferase (400 aa).

Residues Gly39, Trp125, and Asn175 each contribute to the L-aspartate site. Position 239 is an N6-(pyridoxal phosphate)lysine (Lys239). Arg375 provides a ligand contact to L-aspartate.

The protein belongs to the class-I pyridoxal-phosphate-dependent aminotransferase family. Homodimer. Pyridoxal 5'-phosphate is required as a cofactor.

It is found in the cytoplasm. It carries out the reaction L-aspartate + 2-oxoglutarate = oxaloacetate + L-glutamate. The enzyme catalyses L-arogenate + 2-oxoglutarate = prephenate + L-glutamate. In terms of biological role, catalyzes the reversible conversion of aspartate and 2-oxoglutarate to glutamate and oxaloacetate. Can also transaminate prephenate in the presence of glutamate. This chain is Probable aspartate/prephenate aminotransferase (aspC), found in Rhizobium leguminosarum bv. phaseoli.